Here is a 178-residue protein sequence, read N- to C-terminus: Relaxin-like protein SQ10 (178 aa).

Positions 1–20 are cleaved as a signal peptide; the sequence is MPALLFYLLGFCLLQGQVTG. 3 cysteine pairs are disulfide-bonded: C34-C165, C46-C178, and C164-C169. The propeptide at 54 to 150 is connecting peptide; it reads ESPSPENPFL…SSASESNTFS (97 aa).

The protein belongs to the insulin family. Heterodimer of a B chain and an A chain linked by two disulfide bonds.

It is found in the secreted. The sequence is that of Relaxin-like protein SQ10 from Oryctolagus cuniculus (Rabbit).